A 244-amino-acid polypeptide reads, in one-letter code: Eukaryotic translation initiation factor 4E type 1B (244 aa).

The span at 1 to 26 (MNKVEGGGHKEEVVVKEKEVVKEKPS) shows a compositional bias: basic and acidic residues. The disordered stretch occupies residues 1–57 (MNKVEGGGHKEEVVVKEKEVVKEKPSEATAEGVQAGEAKDLPGSLKTQRRKAHREHP). The tract at residues 65 to 68 (HPLQ) is EIF4EBP1/2/3 binding. Residue 84–85 (WQ) participates in mRNA binding. Residues 101-105 (WAVYS) form an EIF4EBP1/2/3 binding region. 130-131 (WE) contributes to the mRNA binding site. The tract at residues 160-167 (ETLLCLVG) is EIF4EBP1/2/3 binding. Residues 185 to 190 (RTKRDK) and 233 to 235 (AKS) contribute to the mRNA site.

This sequence belongs to the eukaryotic initiation factor 4E family. In terms of assembly, EIF4F is a multi-subunit complex, the composition of which varies with external and internal environmental conditions. It is composed of at least EIF4A, EIF4E and EIF4G.

Its function is as follows. Recognizes and binds the 7-methylguanosine-containing mRNA cap during an early step in the initiation of protein synthesis and facilitates ribosome binding by inducing the unwinding of the mRNAs secondary structures. This Mus musculus (Mouse) protein is Eukaryotic translation initiation factor 4E type 1B (Eif4e1b).